Here is a 423-residue protein sequence, read N- to C-terminus: Nucleoporin NUP42 (423 aa).

The C3H1-type zinc finger occupies 1 to 25 (MAICQFFLQGRCRFGDRCWNEHPGA). The FG 1 repeat unit spans residues 14–15 (FG). Positions 24–85 (GARGAGGGRQ…EKPYFSSFDS (62 aa)) are disordered. Residues 40–69 (SGNNRRGWNTTSQRYSNVIQPSSFSKSTPW) are compositionally biased toward polar residues. An interaction with HIV-1 Vpr region spans residues 94–170 (GFGLSENPFA…EYHNFLTSNN (77 aa)). One copy of the FG 2 repeat lies at 95 to 96 (FG). Phosphoserine is present on S106. FG repeat units lie at residues 218-219 (FG), 220-221 (FG), 265-266 (FG), 271-272 (FG), 288-289 (FG), 290-291 (FG), 311-312 (FG), 336-337 (FG), 345-346 (FG), and 364-365 (FG). An interaction with GLE1 region spans residues 365 to 423 (GNSSISTSLSASSSIIATDNVLFTPRDKLTVEELEQFQSKKFTLGKIPLKPPPLELLNV).

Probable component of the nuclear pore complex (NPC). Interacts with nuclear export protein NXF1. Interacts with GLE1. Able to form a heterotrimer with NUP155 and GLE1 in vitro. Interacts with XPO1. In terms of assembly, (Microbial infection) Interacts with the HIV-1 virus proteins Rev and Vpr. The interaction with HIV-1 Rev, a protein that mediates nuclear export of unspliced viral RNAs, suggests that its function may be bypassed by the HIV-1 virus. O-glycosylated. As to expression, ubiquitously expressed.

Its subcellular location is the nucleus. The protein localises to the nuclear pore complex. The protein resides in the nucleus membrane. Required for the export of mRNAs containing poly(A) tails from the nucleus into the cytoplasm. Its function is as follows. (Microbial infection) In case of infection by HIV-1, it may participate in the docking of viral Vpr at the nuclear envelope. The chain is Nucleoporin NUP42 from Homo sapiens (Human).